Reading from the N-terminus, the 217-residue chain is UPF0319 protein VP1009 (217 aa).

The signal sequence occupies residues 1–21; it reads MRLKTWIVAFFLGLFGTTVNA.

Belongs to the UPF0319 family.

The chain is UPF0319 protein VP1009 from Vibrio parahaemolyticus serotype O3:K6 (strain RIMD 2210633).